We begin with the raw amino-acid sequence, 724 residues long: Methionine--tRNA ligase (724 aa).

The 'HIGH' region motif lies at 12–22; sequence PYVNNIPHLGN. Zn(2+)-binding residues include Cys-143, Cys-146, Cys-155, and Cys-158. A 'KMSKS' region motif is present at residues 330 to 334; it reads KFSKS. Lys-333 contacts ATP. The tRNA-binding domain occupies 560 to 665; the sequence is FREKVLLKVV…KNPIPGERII (106 aa).

This sequence belongs to the class-I aminoacyl-tRNA synthetase family. MetG type 1 subfamily. In terms of assembly, homodimer. The cofactor is Zn(2+).

The protein localises to the cytoplasm. It carries out the reaction tRNA(Met) + L-methionine + ATP = L-methionyl-tRNA(Met) + AMP + diphosphate. Is required not only for elongation of protein synthesis but also for the initiation of all mRNA translation through initiator tRNA(fMet) aminoacylation. The sequence is that of Methionine--tRNA ligase from Borrelia garinii subsp. bavariensis (strain ATCC BAA-2496 / DSM 23469 / PBi) (Borreliella bavariensis).